We begin with the raw amino-acid sequence, 640 residues long: 1-deoxy-D-xylulose-5-phosphate synthase (640 aa).

Thiamine diphosphate is bound by residues His-75 and 117 to 119; that span reads GHA. Asp-146 lines the Mg(2+) pocket. Thiamine diphosphate is bound by residues 147–148, Asn-175, and Glu-370; that span reads AA. Position 175 (Asn-175) interacts with Mg(2+).

It belongs to the transketolase family. DXPS subfamily. As to quaternary structure, homodimer. Mg(2+) is required as a cofactor. The cofactor is thiamine diphosphate.

It catalyses the reaction D-glyceraldehyde 3-phosphate + pyruvate + H(+) = 1-deoxy-D-xylulose 5-phosphate + CO2. It participates in metabolic intermediate biosynthesis; 1-deoxy-D-xylulose 5-phosphate biosynthesis; 1-deoxy-D-xylulose 5-phosphate from D-glyceraldehyde 3-phosphate and pyruvate: step 1/1. Its function is as follows. Catalyzes the acyloin condensation reaction between C atoms 2 and 3 of pyruvate and glyceraldehyde 3-phosphate to yield 1-deoxy-D-xylulose-5-phosphate (DXP). The sequence is that of 1-deoxy-D-xylulose-5-phosphate synthase from Chlamydia trachomatis serovar D (strain ATCC VR-885 / DSM 19411 / UW-3/Cx).